Here is a 510-residue protein sequence, read N- to C-terminus: DAP3-binding cell death enhancer 1 (510 aa).

Residues 1–23 (MWRLTGILGRALPRLLGPGFRGI) constitute a mitochondrion transit peptide. Disordered regions lie at residues 19–61 (GFRG…SRDP) and 142–185 (VLPR…SGLL). Residues 24-101 (TPKPTSSDGS…AVLALHLARQ (78 aa)) constitute a propeptide, extended MTS. Positions 35–45 (TTSPTLPLTRL) are enriched in low complexity. Composition is skewed to basic and acidic residues over residues 46-61 (SFDR…SRDP) and 155-167 (GLRE…EDHP). Over residues 169 to 181 (APSQCLPSDSSLR) the composition is skewed to polar residues. TPR repeat units lie at residues 213-245 (AHPP…QLSV), 246-278 (AITF…RGYS), 279-313 (KAQY…VQGH), 314-351 (SLAQ…DSGL), 352-385 (TEAQ…SNGD), 386-423 (SQSR…GNEP), and 471-499 (ASST…TIPS). The short motif at 307–326 (LAAVQGHSLAQYRYARCLLQ) is the SIFI-degron element.

It belongs to the DELE1 family. In terms of assembly, interacts with DAP3. As to quaternary structure, interacts (via TPR repeats) with EIF2AK1/HRI; activating the protein kinase activity of EIF2AK1/HRI, thereby promoting the integrated stress response (ISR). Homooctamer; oligomerization is required to activate EIF2AK1/HRI. Interacts (via TPR repeats) with EIF2AK1/HRI; activating the protein kinase activity of EIF2AK1/HRI, thereby promoting the integrated stress response (ISR). In terms of processing, unstable protein in absence of stress: imported in the mitochondrial matrix following processing by the mitochondrial-processing peptidase (MPP), where it is degraded by LONP1. Stabilized in response to iron deficiency: iron deficiency impairs mitochondrial import, promoting localization at the mitochondrial surface and stabilization. Cleaved by OMA1 in response to mitochondrial stress, generating the DAP3-binding cell death enhancer 1 short form (DELE1(S) or S-DELE1) that accumulates in the cytosol and activates the protein kinase activity of EIF2AK1/HRI. Protein cleavage by OMA1 can take place at different positions, and apparently does not require a specific sequence motif. Post-translationally, ubiquitinated and degraded by the SIFI complex once the mitochondrial stress has been resolved, thereby providing stress response silencing. Within the SIFI complex, UBR4 initiates ubiquitin chain that are further elongated or branched by KCMF1.

The protein localises to the mitochondrion. Its subcellular location is the mitochondrion outer membrane. It is found in the mitochondrion inner membrane. It localises to the cytoplasm. The protein resides in the cytosol. Protein kinase activator that acts as a key activator of the integrated stress response (ISR) following various stresses, such as iron deficiency, mitochondrial stress or mitochondrial DNA breaks. Detects impaired protein import and processing in mitochondria, activating the ISR. May also required for the induction of death receptor-mediated apoptosis through the regulation of caspase activation. Its function is as follows. Protein kinase activator that activates the ISR in response to iron deficiency: iron deficiency impairs mitochondrial import, promoting DELE1 localization at the mitochondrial surface, where it binds and activates EIF2AK1/HRI to trigger the ISR. In terms of biological role, protein kinase activator generated by protein cleavage in response to mitochondrial stress, which accumulates in the cytosol and specifically binds to and activates the protein kinase activity of EIF2AK1/HRI. It thereby activates the integrated stress response (ISR): EIF2AK1/HRI activation promotes eIF-2-alpha (EIF2S1) phosphorylation, leading to a decrease in global protein synthesis and the induction of selected genes, including the transcription factor ATF4, the master transcriptional regulator of the ISR. Also acts as an activator of PRKN-independent mitophagy: activates the protein kinase activity of EIF2AK1/HRI in response to mitochondrial damage, promoting eIF-2-alpha (EIF2S1) phosphorylation, leading to mitochondrial localization of EIF2S1 followed by induction of mitophagy. The protein is DAP3-binding cell death enhancer 1 of Mus musculus (Mouse).